The chain runs to 456 residues: Multidrug resistance protein NorM (456 aa).

12 helical membrane passes run 11-31 (LIKL…MGFV), 53-73 (IWLP…PVVA), 92-112 (VVLA…TQFI), 126-146 (TVGY…FQTL), 159-179 (AMVI…IFVY), 189-209 (GVGC…LLLA), 242-262 (FPVA…ALLV), 268-288 (IIVA…MLPM), 314-334 (SRVG…ITVL), 356-376 (LLLF…AAGA), 385-405 (AIFN…GYIL), and 417-437 (AQGF…MLGV).

This sequence belongs to the multi antimicrobial extrusion (MATE) (TC 2.A.66.1) family.

The protein resides in the cell inner membrane. Multidrug efflux pump that functions as a Na(+)/drug antiporter. Confers resistance to several drugs, such as norfloxacin, ciprofloxacin, ethidium, kanamycin and streptomycin. The protein is Multidrug resistance protein NorM (norM) of Vibrio parahaemolyticus serotype O3:K6 (strain RIMD 2210633).